A 1058-amino-acid chain; its full sequence is Receptor-type guanylate cyclase gcy-22 (1058 aa).

A signal peptide spans 1-23 (MSFISKCFICLLFSTYFLPPVNS). The Extracellular segment spans residues 25 to 470 (VLQVGFLAAN…PKSFTDQYLA (446 aa)). N-linked (GlcNAc...) asparagine glycans are attached at residues N36, N73, N201, N215, N277, N302, N324, N350, and N386. A helical membrane pass occupies residues 471–491 (IILGCTAAALVLIIAVISTIV). Residues 492–1058 (FLVRSKRQEE…IEAKENGESI (567 aa)) are Cytoplasmic-facing. The Protein kinase domain maps to 501 to 809 (EERLNQLWQV…SSNLMDHVFN (309 aa)). A coiled-coil region spans residues 811 to 840 (LEQYASNLEDEVQARMKELTEEKKRSDVLL). Residues 867–997 (TIFFSDVVSF…DSVNTASRME (131 aa)) form the Guanylate cyclase domain.

Belongs to the adenylyl cyclase class-4/guanylyl cyclase family. In terms of tissue distribution, expression in ASER neuron begins at an early larval stage and is maintained in the adult.

The protein resides in the cell membrane. It catalyses the reaction GTP = 3',5'-cyclic GMP + diphosphate. Guanylate cyclase involved in the production of the second messenger cGMP. Regulates chemotaxis responses toward Li(1-), Mg(2+), Cl(1-), Br(1)- and I(1-) salt ions and methionine in ASE right (ASER) sensory neuron. May regulate ASER neuronal activity such as axon sprouting and calcium responses to changes in salt concentrations. This chain is Receptor-type guanylate cyclase gcy-22, found in Caenorhabditis elegans.